Consider the following 341-residue polypeptide: Phenylalanine--tRNA ligase alpha subunit (341 aa).

Position 259 (Glu259) interacts with Mg(2+).

The protein belongs to the class-II aminoacyl-tRNA synthetase family. Phe-tRNA synthetase alpha subunit type 1 subfamily. Tetramer of two alpha and two beta subunits. Mg(2+) is required as a cofactor.

The protein localises to the cytoplasm. It carries out the reaction tRNA(Phe) + L-phenylalanine + ATP = L-phenylalanyl-tRNA(Phe) + AMP + diphosphate + H(+). The protein is Phenylalanine--tRNA ligase alpha subunit of Mycobacterium bovis (strain ATCC BAA-935 / AF2122/97).